We begin with the raw amino-acid sequence, 924 residues long: Autophagy-related protein 9B (924 aa).

Positions 1 to 144 (MVSRMGWGGR…QDSPGLRVGP (144 aa)) are disordered. At 1–207 (MVSRMGWGGR…KIYSYHQRNG (207 aa)) the chain is on the cytoplasmic side. Residues 17–27 (WGDLGPGSVPL) are compositionally biased toward low complexity. Pro residues predominate over residues 28-40 (LPMPLPPPPPPSC). The segment covering 78-88 (LQGTGASQSCH) has biased composition (polar residues). Over residues 98–113 (PTQAQPAMTPASASPS) the composition is skewed to low complexity. A Tyrosine-based sorting signal motif is present at residues 151-154 (YERL). Residues 208–228 (FACILLEDVFQLGQFIFIVTF) traverse the membrane as a helical segment. The Lumenal segment spans residues 229-276 (TTFLLRCVDYNVLFANQPSNHTRPGPFHSKVTLSDAILPSAQCAERIR). Residues 277 to 297 (SSPLLVLLLVLAAGFWLVQLL) traverse the membrane as a helical segment. The Cytoplasmic segment spans residues 298–438 (RSVCNLFSYW…GALAARWGRT (141 aa)). An intramembrane segment occupies 439-459 (VLLLAALNLALSPLVLAWQVL). Topologically, residues 460 to 526 (HVFYSHVELL…AAPPAPLRTL (67 aa)) are cytoplasmic. A helical transmembrane segment spans residues 527–547 (LARQLVFFAGALFAALLVLTV). The Lumenal segment spans residues 548 to 551 (YDED). Residues 552–572 (VLAVEHVLTAMTALGVTATVA) traverse the membrane as a helical segment. Over 573–624 (RSFIPEEQCQGRAPQLLLQTALAHMHYLPEEPGPGGRDRAYRQMAQLLQYRA) the chain is Cytoplasmic. The stretch at 625-645 (VSLLEELLSPLLTPLFLLFWF) is an intramembrane region. Residues 646 to 924 (RPRALEIIDF…KEPDRASCTD (279 aa)) lie on the Cytoplasmic side of the membrane. Positions 847–924 (QQEPWGEAAA…KEPDRASCTD (78 aa)) are disordered. Positions 878 to 890 (SWSSDGSSPASSP) are enriched in low complexity. Residues 913–924 (TQKEPDRASCTD) are compositionally biased toward basic and acidic residues.

The protein belongs to the ATG9 family. Homotrimer; forms a homotrimer with a central pore that forms a path between the two membrane leaflets. Highly expressed in placenta (trophoblast cells) and pituitary gland. Not expressed in vascular endothelial.

It is found in the preautophagosomal structure membrane. The enzyme catalyses a 1,2-diacyl-sn-glycero-3-phosphocholine(in) = a 1,2-diacyl-sn-glycero-3-phosphocholine(out). It carries out the reaction a 1,2-diacyl-sn-glycero-3-phospho-L-serine(in) = a 1,2-diacyl-sn-glycero-3-phospho-L-serine(out). It catalyses the reaction a 1,2-diacyl-sn-glycero-3-phosphoethanolamine(in) = a 1,2-diacyl-sn-glycero-3-phosphoethanolamine(out). Functionally, phospholipid scramblase involved in autophagy by mediating autophagosomal membrane expansion. Cycles between the preautophagosomal structure/phagophore assembly site (PAS) and the cytoplasmic vesicle pool and supplies membrane for the growing autophagosome. Lipid scramblase activity plays a key role in preautophagosomal structure/phagophore assembly by distributing the phospholipids that arrive through ATG2 (ATG2A or ATG2B) from the cytoplasmic to the luminal leaflet of the bilayer, thereby driving autophagosomal membrane expansion. In addition to autophagy, also plays a role in necrotic cell death. In Homo sapiens (Human), this protein is Autophagy-related protein 9B (ATG9B).